The following is a 110-amino-acid chain: UPF0122 protein lin1916 (110 aa).

It belongs to the UPF0122 family.

Functionally, might take part in the signal recognition particle (SRP) pathway. This is inferred from the conservation of its genetic proximity to ftsY/ffh. May be a regulatory protein. This Listeria innocua serovar 6a (strain ATCC BAA-680 / CLIP 11262) protein is UPF0122 protein lin1916.